We begin with the raw amino-acid sequence, 273 residues long: Signal recognition particle subunit SEC65 (273 aa).

The tract at residues 25–71 (PSLRTPIAPKITPKVVRSQDQENPAFLPGTNNNSNSNNNSSNEKEQL) is disordered. Over residues 55–65 (NNNSNSNNNSS) the composition is skewed to low complexity.

In terms of assembly, fungal signal recognition particle (SRP) complex consists of a 7S RNA molecule (scR1) and at least six protein subunits: SRP72, SRP68, SRP54, SEC65, SRP21 and SRP14.

The protein localises to the cytoplasm. Its function is as follows. Signal-recognition-particle (SRP) assembly has a crucial role in targeting secretory proteins to the rough endoplasmic reticulum (ER) membrane. SRP is required for the cotranslational protein translocation for ER import and preferentially recognizes strongly hydrophobic signal sequences. It is involved in targeting the nascent chain-ribosome (RNC) complex to the ER and is proposed to participate in the arrest of nascent chain elongation during membrane targeting. SEC65 is required for SRP integrity. In Saccharomyces cerevisiae (strain ATCC 204508 / S288c) (Baker's yeast), this protein is Signal recognition particle subunit SEC65 (SEC65).